A 430-amino-acid polypeptide reads, in one-letter code: Probable transporter SCO4007 (430 aa).

The span at 1 to 17 shows a compositional bias: low complexity; the sequence is MPSSPSSTTPAPTSTPA. The interval 1–26 is disordered; sequence MPSSPSSTTPAPTSTPAARREPSGKG. 11 consecutive transmembrane segments (helical) span residues 34-54, 70-90, 101-121, 126-146, 159-179, 188-208, 244-264, 275-295, 315-335, 362-382, and 383-403; these read LFLP…YLAA, AVAW…LFFA, LVAA…ASAG, AGAV…VPLV, VAAV…LGGL, AVFV…AYIL, AGMY…LTEG, GLFG…GGLV, VPLF…AVLV, TAYV…AGPA, and FGHW…VLGW.

Belongs to the major facilitator superfamily.

Its subcellular location is the cell membrane. This chain is Probable transporter SCO4007, found in Streptomyces coelicolor (strain ATCC BAA-471 / A3(2) / M145).